The chain runs to 157 residues: 2-C-methyl-D-erythritol 2,4-cyclodiphosphate synthase (157 aa).

Residues D8 and H10 each coordinate a divalent metal cation. 4-CDP-2-C-methyl-D-erythritol 2-phosphate is bound by residues 8–10 and 34–35; these read DVH and HS. H42 serves as a coordination point for a divalent metal cation. Residues 56 to 58, 61 to 65, 100 to 106, 132 to 135, F139, and R142 each bind 4-CDP-2-C-methyl-D-erythritol 2-phosphate; these read DIG, FPDTD, AQAPKMA, and TTEE.

The protein belongs to the IspF family. In terms of assembly, homotrimer. The cofactor is a divalent metal cation.

It carries out the reaction 4-CDP-2-C-methyl-D-erythritol 2-phosphate = 2-C-methyl-D-erythritol 2,4-cyclic diphosphate + CMP. It functions in the pathway isoprenoid biosynthesis; isopentenyl diphosphate biosynthesis via DXP pathway; isopentenyl diphosphate from 1-deoxy-D-xylulose 5-phosphate: step 4/6. In terms of biological role, involved in the biosynthesis of isopentenyl diphosphate (IPP) and dimethylallyl diphosphate (DMAPP), two major building blocks of isoprenoid compounds. Catalyzes the conversion of 4-diphosphocytidyl-2-C-methyl-D-erythritol 2-phosphate (CDP-ME2P) to 2-C-methyl-D-erythritol 2,4-cyclodiphosphate (ME-CPP) with a corresponding release of cytidine 5-monophosphate (CMP). This Pseudomonas entomophila (strain L48) protein is 2-C-methyl-D-erythritol 2,4-cyclodiphosphate synthase.